We begin with the raw amino-acid sequence, 246 residues long: 23S rRNA (guanosine-2'-O-)-methyltransferase RlmB (246 aa).

S-adenosyl-L-methionine is bound by residues G196, I216, and L225.

This sequence belongs to the class IV-like SAM-binding methyltransferase superfamily. RNA methyltransferase TrmH family. RlmB subfamily. In terms of assembly, homodimer.

It localises to the cytoplasm. It catalyses the reaction guanosine(2251) in 23S rRNA + S-adenosyl-L-methionine = 2'-O-methylguanosine(2251) in 23S rRNA + S-adenosyl-L-homocysteine + H(+). Specifically methylates the ribose of guanosine 2251 in 23S rRNA. This is 23S rRNA (guanosine-2'-O-)-methyltransferase RlmB from Yersinia pestis.